An 898-amino-acid polypeptide reads, in one-letter code: Magnesium-transporting ATPase, P-type 1 (898 aa).

The Cytoplasmic segment spans residues 1–94 (MFKEIFTRLI…QPSPWWVHLW (94 aa)). A helical transmembrane segment spans residues 95 to 115 (VCYRNPFNILLTILGAISYAT). Position 116 (Glu-116) is a topological domain, extracellular. The chain crosses the membrane as a helical span at residues 117–137 (DLFAAGVIALMVAISTLLNFI). Over 138–287 (QEARSTKAAD…PNAFQQGISR (150 aa)) the chain is Cytoplasmic. A helical membrane pass occupies residues 288–308 (VSMLLIRFMLVMAPVVLLING). Over 309–317 (YTKGDWWEA) the chain is Extracellular. Residues 318–335 (ALFALSVAVGLTPEMLPM) traverse the membrane as a helical segment. Residue Glu-331 coordinates Mg(2+). At 336–695 (IVTSTLARGA…IEGRRTFANM (360 aa)) the chain is on the cytoplasmic side. Asp-373 acts as the 4-aspartylphosphate intermediate in catalysis. 3 residues coordinate Mg(2+): Asp-641, Asp-645, and Asn-709. The helical transmembrane segment at 696–715 (LKYIKMTASSNFGNVFSVLV) threads the bilayer. The Extracellular portion of the chain corresponds to 716–724 (ASAFLPFLP). A helical transmembrane segment spans residues 725 to 744 (MLPLHLLIQNLLYDVSQVAI). Residues Asn-734 and Asp-738 each coordinate Mg(2+). Residues 745 to 766 (PFDNVDDEQIQKPQRWNPADLG) lie on the Cytoplasmic side of the membrane. A helical transmembrane segment spans residues 767–790 (RFMIFFGPISSIFDILTFCLMWWV). Topologically, residues 791-799 (FHANTPETQ) are extracellular. The helical transmembrane segment at 800-818 (TLFQSGWFVVGLLSQTLIV) threads the bilayer. Residues 819 to 831 (HMIRTRRVPFIQS) lie on the Cytoplasmic side of the membrane. A helical transmembrane segment spans residues 832–851 (CASWPLMIMTVIVMIVGIAL). Topologically, residues 852-866 (PFSPLASYLQLQALP) are extracellular. A helical transmembrane segment spans residues 867–886 (LSYFPWLVAILAGYMTLTQL). Residues 887 to 898 (VKGFYSRRYGWQ) are Cytoplasmic-facing.

The protein belongs to the cation transport ATPase (P-type) (TC 3.A.3) family. Type IIIB subfamily.

Its subcellular location is the cell inner membrane. The enzyme catalyses Mg(2+)(out) + ATP + H2O = Mg(2+)(in) + ADP + phosphate + H(+). In terms of biological role, mediates magnesium influx to the cytosol. The protein is Magnesium-transporting ATPase, P-type 1 (mgtA) of Escherichia coli O157:H7.